The chain runs to 279 residues: ATP synthase gamma chain (279 aa).

It belongs to the ATPase gamma chain family. In terms of assembly, F-type ATPases have 2 components, CF(1) - the catalytic core - and CF(0) - the membrane proton channel. CF(1) has five subunits: alpha(3), beta(3), gamma(1), delta(1), epsilon(1). CF(0) has three main subunits: a, b and c.

Its subcellular location is the cell membrane. Its function is as follows. Produces ATP from ADP in the presence of a proton gradient across the membrane. The gamma chain is believed to be important in regulating ATPase activity and the flow of protons through the CF(0) complex. This Mycoplasmopsis pulmonis (strain UAB CTIP) (Mycoplasma pulmonis) protein is ATP synthase gamma chain.